Reading from the N-terminus, the 332-residue chain is Monoterpene synthase 25 (332 aa).

Asp115, Glu180, Asn240, Ser244, and Glu248 together coordinate Mg(2+). The DDXXXXD motif signature appears at 115–121 (DDPVVFD). The NSE/DTE motif motif lies at 240 to 248 (NDILSFYKE).

This sequence belongs to the trichodiene synthase family. Mg(2+) serves as cofactor.

Functionally, terpene cyclase that catalyzes the cyclization of geranyl diphosphate (GPP) to myrcene and linalool. This is Monoterpene synthase 25 from Postia placenta (strain ATCC 44394 / Madison 698-R) (Brown rot fungus).